A 71-amino-acid chain; its full sequence is Pro-glucagon (71 aa).

This sequence belongs to the glucagon family.

It localises to the secreted. Its function is as follows. Plays a key role in glucose metabolism and homeostasis. Regulates blood glucose by increasing gluconeogenesis and decreasing glycolysis. The chain is Pro-glucagon (gcg) from Ictalurus punctatus (Channel catfish).